Here is a 381-residue protein sequence, read N- to C-terminus: Cell division protein FtsZ (381 aa).

The interval Met1 to Glu25 is disordered. A compositionally biased stretch (basic and acidic residues) spans Ala7 to Pro17. Residues Gly48 to Asn52, Gly135 to Gly137, Glu166, Arg170, and Asp213 each bind GTP.

It belongs to the FtsZ family. In terms of assembly, homodimer. Polymerizes to form a dynamic ring structure in a strictly GTP-dependent manner. Interacts directly with several other division proteins.

It is found in the cytoplasm. Functionally, essential cell division protein that forms a contractile ring structure (Z ring) at the future cell division site. The regulation of the ring assembly controls the timing and the location of cell division. One of the functions of the FtsZ ring is to recruit other cell division proteins to the septum to produce a new cell wall between the dividing cells. Binds GTP and shows GTPase activity. The sequence is that of Cell division protein FtsZ from Methanothermobacter thermautotrophicus (strain ATCC 29096 / DSM 1053 / JCM 10044 / NBRC 100330 / Delta H) (Methanobacterium thermoautotrophicum).